The following is a 337-amino-acid chain: Peptide methionine sulfoxide reductase MsrA/MsrB (337 aa).

Positions 28–181 (KDIYLAGGCF…PGGYCHVDLS (154 aa)) are peptide methionine sulfoxide reductase A. Cysteine 36 is an active-site residue. A MsrB domain is found at 198–321 (KDELKAKLSD…NGASLKFIPL (124 aa)). Residue cysteine 310 is the Nucleophile of the active site.

The protein in the N-terminal section; belongs to the MsrA Met sulfoxide reductase family. In the C-terminal section; belongs to the MsrB Met sulfoxide reductase family.

It carries out the reaction L-methionyl-[protein] + [thioredoxin]-disulfide + H2O = L-methionyl-(S)-S-oxide-[protein] + [thioredoxin]-dithiol. The enzyme catalyses [thioredoxin]-disulfide + L-methionine + H2O = L-methionine (S)-S-oxide + [thioredoxin]-dithiol. It catalyses the reaction L-methionyl-[protein] + [thioredoxin]-disulfide + H2O = L-methionyl-(R)-S-oxide-[protein] + [thioredoxin]-dithiol. Its function is as follows. Has an important function as a repair enzyme for proteins that have been inactivated by oxidation. Catalyzes the reversible oxidation-reduction of methionine sulfoxide in proteins to methionine. This chain is Peptide methionine sulfoxide reductase MsrA/MsrB (msrAB), found in Campylobacter fetus.